Reading from the N-terminus, the 471-residue chain is O-acetyltransferase astG (471 aa).

It belongs to the fumigaclavine B O-acetyltransferase family. Monomer.

It catalyses the reaction dideacetyl astellolide A + acetyl-CoA = 14-deacetyl astellolide A + CoA. The enzyme catalyses dideacetyl astellolide B + acetyl-CoA = 14-deacetyl astellolide B + CoA. The protein operates within secondary metabolite biosynthesis; terpenoid biosynthesis. Its function is as follows. O-acetyltransferase; part of the gene cluster that mediates the biosynthesis of astellolides, drimane-type sesquiterpene esters that show antimicrobial, anti-inflammatory, and anti-tumor activities. The first step in astellolide biosynthesis is performed by the sesquiterpene cyclase astC that catalyzes the formation of drimanyl pyrophosphate from farnesyl pyrophosphate. Drimanyl pyrophosphate is then dephosphorylated by the sesquiterpene phosphatase astI to produce drimanyl monophosphate which is further dephosphorylated to drim-8-ene-11-ol by atsK. Drim-8-ene-11-ol is converted to confertifolin, probably by the cytochrome P450 monooxygenase astD and/or the dehydrogenase astE. The cytochrome P450 monooxygenases astB, astF and astJ then hydroxylate confertifolin at C6, C14, or C15 to form trihydroxy confertifolin. The nonribosomal peptide synthetase astA catalyzes ester bond formation between trihydroxy contifolin and benzoic acid (BA) or 4-hydroxy benzoic acid (4HBA), leading to the formation of dideacetyl astellolides A and B, respectively. Finally, the O-acetyltransferase astG converts dideacetyl astellolides A and B into deacetyl astellolides A and B. This chain is O-acetyltransferase astG, found in Aspergillus oryzae (strain ATCC 42149 / RIB 40) (Yellow koji mold).